The following is a 262-amino-acid chain: DNA repair protein RecO (262 aa).

Belongs to the RecO family.

Its function is as follows. Involved in DNA repair and RecF pathway recombination. This Acidovorax ebreus (strain TPSY) (Diaphorobacter sp. (strain TPSY)) protein is DNA repair protein RecO.